A 231-amino-acid chain; its full sequence is LexA repressor (231 aa).

Positions 1–24 are disordered; the sequence is MTDRKEHKMKPGRRPTEGMTPSQE. The segment at residues 43 to 62 is a DNA-binding region (H-T-H motif); it reads VKEIAEALGMKTPSAHEQVQ. Catalysis depends on for autocatalytic cleavage activity residues serine 146 and lysine 183.

The protein belongs to the peptidase S24 family. Homodimer.

The enzyme catalyses Hydrolysis of Ala-|-Gly bond in repressor LexA.. Its function is as follows. Represses a number of genes involved in the response to DNA damage (SOS response), including recA and lexA. In the presence of single-stranded DNA, RecA interacts with LexA causing an autocatalytic cleavage which disrupts the DNA-binding part of LexA, leading to derepression of the SOS regulon and eventually DNA repair. In Magnetococcus marinus (strain ATCC BAA-1437 / JCM 17883 / MC-1), this protein is LexA repressor.